The sequence spans 238 residues: 14-3-3 family protein artA (238 aa).

The protein belongs to the 14-3-3 family.

Functionally, 14-3-3 family protein that plays a role in the morphological differentiation and secondary metabolism biosynthesis. Required for normal fungal morphogenesis in an environment-dependent manner, affecting the balance between production of conidiophores and the formation of sclerotia, resistant structures that are necessary for the dissemination and survival. Acts as a positive regulator of conidiation and a negative regulator of sclerotial production. Also regulates the production of secondary metabolites such as aflatoxin, but also the indole-tetramic acid mycotoxin cyclopiazonic acid (CPA) and ustiloxin, an inhibitor of microtubule assembly. The sequence is that of 14-3-3 family protein artA from Aspergillus flavus (strain ATCC 200026 / FGSC A1120 / IAM 13836 / NRRL 3357 / JCM 12722 / SRRC 167).